Consider the following 521-residue polypeptide: MMLDEAVGRRVCCDGERGTVRYVGPVPPTAGVWLGVEWDHPERGKHDGSHDGVRYFTCRHPTGGSFVRPQKASFGVDYVTALKQRYEVEIEEVTAEEMKISSKTVVMVGFENVKKKQSVKNLTEVGLRRCEVSAPGPENEIRNTTPFVQSLDLSGNLLSSWEVLAAITEQLDSLQELHLSHNRLSISSAPSSLSSAFSHLRVLSINSCALTWTQVLHCAPMWQQVEELYLADNNITELLRPEHVLQALTVLDLSNNQIAQETVLEISHLPRLERLNLSSTSLSEIKFSDVPAGKKTTLFPALKELLLDDNNISEWRVVNELEKLPSLVYLSCRRNPLLHKEKNLETARQIMIARLGQLELLDMRQILSDERRGAELDYCKMFGSAWLRAGGHREAEKNNPNTDFMTEHPRYLTLIQKYGAPDEGELREQKPFALKNQLLTITFLCPEDLERKPIEKKLPGSMIVQKVKGLLHRLLKLPGVELKLTYTCAKMADREIEIDNDLKPLQFYSVEDGDKILVRWS.

Residues 24-68 form the CAP-Gly domain; sequence GPVPPTAGVWLGVEWDHPERGKHDGSHDGVRYFTCRHPTGGSFVR. LRR repeat units lie at residues 147–168, 173–194, 199–220, 224–245, 247–268, 271–292, and 301–322; these read FVQS…AAIT, SLQE…SSLS, HLRV…HCAP, QVEE…EHVL, ALTV…EISH, RLER…DVPA, and ALKE…NELE. Residues 335-377 form the LRRCT domain; sequence NPLLHKEKNLETARQIMIARLGQLELLDMRQILSDERRGAELD.

This sequence belongs to the TBCE family. Supercomplex made of cofactors A to E. Cofactors A and D function by capturing and stabilizing tubulin in a quasi-native conformation. Cofactor E binds to the cofactor D-tubulin complex; interaction with cofactor C then causes the release of tubulin polypeptides that are committed to the native state.

The protein resides in the cytoplasm. It localises to the cytoskeleton. Tubulin-folding protein; involved in the second step of the tubulin folding pathway. This is Tubulin-specific chaperone E (tbce) from Danio rerio (Zebrafish).